The primary structure comprises 140 residues: Nucleoside diphosphate kinase (140 aa).

Residues Lys11, Phe59, Arg87, Thr93, Arg104, and Asn114 each contribute to the ATP site. The active-site Pros-phosphohistidine intermediate is His117.

This sequence belongs to the NDK family. Homotetramer. Requires Mg(2+) as cofactor.

It is found in the cytoplasm. It carries out the reaction a 2'-deoxyribonucleoside 5'-diphosphate + ATP = a 2'-deoxyribonucleoside 5'-triphosphate + ADP. The enzyme catalyses a ribonucleoside 5'-diphosphate + ATP = a ribonucleoside 5'-triphosphate + ADP. In terms of biological role, major role in the synthesis of nucleoside triphosphates other than ATP. The ATP gamma phosphate is transferred to the NDP beta phosphate via a ping-pong mechanism, using a phosphorylated active-site intermediate. This Sinorhizobium medicae (strain WSM419) (Ensifer medicae) protein is Nucleoside diphosphate kinase.